The sequence spans 408 residues: Probable medium-chain specific acyl-CoA dehydrogenase 2, mitochondrial (408 aa).

The N-terminal 5 residues, 1–5 (MLSRL), are a transit peptide targeting the mitochondrion. FAD-binding positions include 143-152 (YCVTEPGAGS) and 176-178 (WIT). Position 152 (S152) interacts with substrate. 263–266 (DMTR) lines the substrate pocket. FAD contacts are provided by residues 291–293 (RKA), 301–302 (HQ), and 355–359 (MLFRC). E382 serves as the catalytic Proton acceptor. G383 is a substrate binding site. Residue 384–386 (TSQ) participates in FAD binding. Residue R394 coordinates substrate.

Belongs to the acyl-CoA dehydrogenase family. As to quaternary structure, homotetramer. The cofactor is FAD.

The protein localises to the mitochondrion matrix. The enzyme catalyses a medium-chain 2,3-saturated fatty acyl-CoA + oxidized [electron-transfer flavoprotein] + H(+) = a medium-chain (2E)-enoyl-CoA + reduced [electron-transfer flavoprotein]. Its pathway is lipid metabolism; mitochondrial fatty acid beta-oxidation. Functionally, this enzyme is specific for acyl chain lengths of 4 to 16. This is Probable medium-chain specific acyl-CoA dehydrogenase 2, mitochondrial from Caenorhabditis briggsae.